We begin with the raw amino-acid sequence, 549 residues long: Teichoic acids export ATP-binding protein TagH (549 aa).

The region spanning 22 to 243 is the ABC transporter domain; sequence DKLKDLFFRS…YDEFLKKYNQ (222 aa). Residue 57-64 coordinates ATP; sequence GLNGSGKS. A unknown region spans residues 244–549; it reads MSVEERKDLR…EIQSISIVKK (306 aa). The region spanning 346-415 is the SH3b domain; sequence AAKYIVNSNG…ISTKFIEPFK (70 aa).

This sequence belongs to the ABC transporter superfamily. Teichoic acids exporter (TC 3.A.1.104.1) family. In terms of assembly, the complex is composed of two ATP-binding proteins (TagH) and two transmembrane proteins (TagG).

The protein localises to the cell membrane. It catalyses the reaction ATP + H2O + teichoic acidSide 1 = ADP + phosphate + teichoic acidSide 2.. Its function is as follows. Part of the ABC transporter complex TagGH involved in teichoic acids export. Responsible for energy coupling to the transport system. This Bacillus anthracis protein is Teichoic acids export ATP-binding protein TagH.